An 802-amino-acid chain; its full sequence is G-type lectin S-receptor-like serine/threonine-protein kinase At1g61550 (802 aa).

Positions 1–19 (MTRFACFLFSTLLLSFSYA) are cleaved as a signal peptide. The Bulb-type lectin domain maps to 20–139 (AITPTSPLSI…VSGITLWQSF (120 aa)). The Extracellular segment spans residues 20 to 421 (AITPTSPLSI…EMGGNQRKKT (402 aa)). N-linked (GlcNAc...) asparagine glycans are attached at residues N48, N89, N112, N231, and N262. The 37-residue stretch at 273-309 (PANTCDFYGVCGPFGLCVMSIPPKCKCFKGFVPQFSE) folds into the EGF-like domain. Disulfide bonds link C277–C289 and C283–C297. N-linked (GlcNAc...) asparagine glycosylation is found at N315, N331, and N370. The 83-residue stretch at 328–410 (CQGNSTGRHV…GELLSIRLAS (83 aa)) folds into the PAN domain. Intrachain disulfides connect C363–C384 and C367–C373. A helical membrane pass occupies residues 422-442 (IIASIVSISLFVTLASAAFGF). Residues 443–802 (WRYRLKHNAI…EVTQSVVLGR (360 aa)) are Cytoplasmic-facing. The region spanning 489–774 (FSLVNKLGQG…DLPLPKEPTF (286 aa)) is the Protein kinase domain. ATP contacts are provided by residues 495 to 503 (LGQGGFGPV) and K517. Phosphoserine occurs at positions 523 and 538. A caM-binding region spans residues 578–595 (RKRVEIDWPKRFSIIQGI). The Proton acceptor role is filled by D614. S618 and S631 each carry phosphoserine. T648 is subject to Phosphothreonine. S691 bears the Phosphoserine mark.

The protein belongs to the protein kinase superfamily. Ser/Thr protein kinase family.

The protein resides in the cell membrane. It carries out the reaction L-seryl-[protein] + ATP = O-phospho-L-seryl-[protein] + ADP + H(+). The enzyme catalyses L-threonyl-[protein] + ATP = O-phospho-L-threonyl-[protein] + ADP + H(+). The sequence is that of G-type lectin S-receptor-like serine/threonine-protein kinase At1g61550 from Arabidopsis thaliana (Mouse-ear cress).